The following is a 480-amino-acid chain: Histone-lysine N-methyltransferase ASHR1 (480 aa).

The region spanning 11–248 is the SET domain; the sequence is RCLGVSNLPQ…KDSEITISYI (238 aa). Zn(2+) contacts are provided by cysteine 56, cysteine 59, cysteine 68, cysteine 71, cysteine 77, cysteine 81, histidine 89, and cysteine 93. An MYND-type zinc finger spans residues 56–93; sequence CDGCFKTNNLKKCSACQVVWYCGSSCQKSEWKLHRDEC.

Belongs to the class V-like SAM-binding methyltransferase superfamily. Histone-lysine methyltransferase family. SET2 subfamily.

The protein localises to the nucleus. It localises to the chromosome. It carries out the reaction L-lysyl-[histone] + S-adenosyl-L-methionine = N(6)-methyl-L-lysyl-[histone] + S-adenosyl-L-homocysteine + H(+). Its function is as follows. Histone methyltransferase. The chain is Histone-lysine N-methyltransferase ASHR1 (ASHR1) from Arabidopsis thaliana (Mouse-ear cress).